The chain runs to 438 residues: Succinyl-CoA:glutarate CoA-transferase (438 aa).

A mitochondrion-targeting transit peptide spans 1–31 (MLATLARVAALRRTCLFSGRGGGRGLWTGRP). The active-site Nucleophile is the Asp-205. Lys-394 is modified (N6-acetyllysine).

It belongs to the CoA-transferase III family. In terms of tissue distribution, highly expressed in kidney. Intermediate expression in liver, skeletal muscle and pancreas. Little to no expression detected in other tissues examined.

Its subcellular location is the mitochondrion. The enzyme catalyses glutarate + succinyl-CoA = glutaryl-CoA + succinate. It carries out the reaction 3-hydroxy-3-methylglutarate + succinyl-CoA = (3S)-3-hydroxy-3-methylglutaryl-CoA + succinate. It catalyses the reaction 3-hydroxy-3-methylglutarate + glutaryl-CoA = (3S)-3-hydroxy-3-methylglutaryl-CoA + glutarate. The catalysed reaction is hexanedioate + glutaryl-CoA = hexanedioyl-CoA + glutarate. The enzyme catalyses itaconate + glutaryl-CoA = itaconyl-CoA + glutarate. It carries out the reaction itaconate + succinyl-CoA = itaconyl-CoA + succinate. With respect to regulation, inhibited by valsartan and losartan carboxylate. Functionally, coenzyme A (CoA) transferase that reversibly catalyzes the transfer of a CoA moiety from a dicarboxyl-CoA to a dicarboxylate in a metabolite recycling process. Displays preference for succinyl-CoA and glutarate-CoA as dicarboxyl-CoA donors and glutarate, succinate, adipate/hexanedioate, itaconate and 3-hydroxy-3-methylglutarate as dicarboxylate acceptors. Acts on intermediates or end products of lysine and tryptophan degradation pathway, in particular catalyzes succinyl-CoA-dependent reesterification of free glutarate into glutaryl-CoA to prevent renal excretion of glutarate. Upon inflammation, may convert macrophage-derived itaconate to itaconyl-CoA in erythroid precursors where it negatively regulates the TCA cycle and heme synthesis to limit erythroid differentiation in the context of stress erythropoiesis. The polypeptide is Succinyl-CoA:glutarate CoA-transferase (Homo sapiens (Human)).